Consider the following 548-residue polypeptide: Chaperone Ric-8A (548 aa).

Disordered regions lie at residues 443-484 (DPGH…EGMT) and 517-548 (GKMTSMEPHELHHLASQQFGESNNSDSDSDTN).

This sequence belongs to the synembryn family.

Its subcellular location is the cytoplasm. The protein localises to the cell cortex. Chaperone that specifically binds and folds nascent G alpha proteins prior to G protein heterotrimer formation, promoting their stability and activity: folds GNAI1, GNAO1, GNA13 and GNAQ. Does not fold G(s) G-alpha proteins GNAS nor GNAL. Also acts as a guanine nucleotide exchange factor (GEF) for G alpha proteins by stimulating exchange of bound GDP for free GTP. The chain is Chaperone Ric-8A (ric8a) from Danio rerio (Zebrafish).